We begin with the raw amino-acid sequence, 634 residues long: Ankyrin repeat and SOCS box protein 2 (634 aa).

The UIM domain occupies 26–45 (SEEELLQMAIEQSLADKTRG). The segment at 36 to 82 (EQSLADKTRGPTPAEASASSQTNHQPGHFHPWTRSPSSPENPPARAP) is disordered. ANK repeat units lie at residues 104–133 (AAMDPVLKAIKEGDEEALKIMIQDGKNLAE), 137–167 (EGWLPLHEAAYYGQLGCLKVLQQAYPGTIDQ), 171–200 (QEETALYLATCREHLDCLLSLLQAGAEPDI), 204–233 (SRETPLYKACERKNAEAVRILVRYNADANH), 237–266 (RGWTALHESVSRNDLEVMEILVSGGAKVEA), 270–299 (YSITPLFVAAQSGQLEALRFLAKHGADINT), 303–332 (DSASALYEASKNEHEDVVEFLLSQGADANK), 336–365 (DGLLPLHVASKKGNYRIVQMLLPVTSRTRV), 368–397 (SGISPLHLAAERNHDAVLEALLAARFDVNA), 410–439 (RRSSALYFAVVNNNVYATELLLLAGADPNR), 440–469 (DVISPLLVAIRHGCLRTMQLLLDHGANIDA), and 476–504 (TAFPATIMFAMKCLSLLKFLMDLGCDGEP). Ser-371 bears the Phosphoserine mark. The SOCS box domain occupies 580-634 (EDWAVIKEKAEPPRPLAHLCRLRVRKAIGKYRIKLLDTLPLPGRLIRYLKYENTQ).

Belongs to the ankyrin SOCS box (ASB) family. In terms of assembly, component of a probable ECS E3 ubiquitin-protein ligase complex which contains CUL5, either RBX1 or RNF7/RBX2, Elongin BC complex (ELOB and ELOC) and ASB2. Interacts with SKP2. Through its interaction with SKP2, likely to bridge the formation of dimeric E3-ubiquitin-protein ligase complexes composed of an ECS complex and an SCF(SKP2) complex. Interacts with JAK2; the interaction targets JAK2 for Notch-mediated proteasomal degradation. Interacts with TCF3/E2A; the interaction is mediated by SKP2 and targets TCF3 for Notch-mediated proteasomal degradation. As to quaternary structure, interacts with DES. Monoubiquitinated. In terms of processing, not monoubiquitinated. Post-translationally, phosphorylation at Ser-371 is required for association with FLNA and subsequent FLNA degradation. In terms of tissue distribution, highest expression in muscle, heart and spleen. Highly expressed in cells of the first and second heart fields in the developing embryonic heart. At 9.5 dpc, robust expression predominantly in the left and right ventricles (RV) and to a lower extent in inflow and outflow tracts. At 10.5 and 11.5 dpc, expression is restricted to the myocardium with no expression observed in the endocardium. Not expressed in immature dendritic cells. Highly expressed in adult skeletal muscle with very low levels in adult bone marrow. As to expression, expressed in immature dendritic cells and in primary dendritic cells derived from the spleen. Highly expressed in adult bone marrow with negligible levels in adult skeletal muscle. Expressed at higher levels in T helper type 2 (Th2) cells than in regulatory T (Treg) cells, type 1 helper T (Th1) cells and T helper 17 (Th17) cells.

The protein resides in the cytoplasm. It localises to the cytoskeleton. Its subcellular location is the stress fiber. It is found in the myofibril. The protein localises to the sarcomere. The protein resides in the z line. Its pathway is protein modification; protein ubiquitination. Its function is as follows. Substrate-recognition component of a SCF-like ECS (Elongin-Cullin-SOCS-box protein) E3 ubiquitin-protein ligase complex which mediates the ubiquitination and subsequent proteasomal degradation of target proteins. Mediates Notch-induced ubiquitination and degradation of substrates including TCF3/E2A and JAK2. Required during embryonic heart development for complete heart looping. Required for cardiomyocyte differentiation. Specifically promotes the ubiquitination of SMAD9 and targets it for proteasomal degradation, leading to avoid excessive accumulation of SMAD9. Plays a role in the regulation of NK-cell migration by modulating protein levels of filamin A/FLNA via regulation of its ubiquitination and proteasome degradation. In terms of biological role, involved in myogenic differentiation and targets filamin FLNB for proteasomal degradation but not filamin FLNA. Also targets DES for proteasomal degradation. Acts as a negative regulator of skeletal muscle mass. Targets filamins FLNA and FLNB for proteasomal degradation. This leads to enhanced adhesion of hematopoietic cells to fibronectin. Required for FLNA degradation in immature cardiomyocytes which is necessary for actin cytoskeleton remodeling, leading to proper organization of myofibrils and function of mature cardiomyocytes. Required for degradation of FLNA and FLNB in immature dendritic cells (DC) which enhances immature DC migration by promoting DC podosome formation and DC-mediated degradation of the extracellular matrix. Does not promote proteasomal degradation of tyrosine-protein kinases JAK1 or JAK2 in hematopoietic cells. This is Ankyrin repeat and SOCS box protein 2 from Mus musculus (Mouse).